The chain runs to 279 residues: UPF0173 metal-dependent hydrolase MXAN_1394 (279 aa).

The protein belongs to the UPF0173 family.

The polypeptide is UPF0173 metal-dependent hydrolase MXAN_1394 (Myxococcus xanthus (strain DK1622)).